Reading from the N-terminus, the 252-residue chain is Ditrans,polycis-undecaprenyl-diphosphate synthase ((2E,6E)-farnesyl-diphosphate specific) (252 aa).

Residue Asp-25 is part of the active site. Asp-25 contacts Mg(2+). Substrate-binding positions include 26-29, Trp-30, Arg-38, His-42, and 70-72; these read GNGR and SSE. Asn-73 functions as the Proton acceptor in the catalytic mechanism. Substrate contacts are provided by Trp-74, Arg-76, and Arg-193. His-198 serves as a coordination point for Mg(2+). 199-201 lines the substrate pocket; sequence RIS. Glu-212 is a binding site for Mg(2+).

The protein belongs to the UPP synthase family. Homodimer. The cofactor is Mg(2+).

It catalyses the reaction 8 isopentenyl diphosphate + (2E,6E)-farnesyl diphosphate = di-trans,octa-cis-undecaprenyl diphosphate + 8 diphosphate. Functionally, catalyzes the sequential condensation of isopentenyl diphosphate (IPP) with (2E,6E)-farnesyl diphosphate (E,E-FPP) to yield (2Z,6Z,10Z,14Z,18Z,22Z,26Z,30Z,34E,38E)-undecaprenyl diphosphate (di-trans,octa-cis-UPP). UPP is the precursor of glycosyl carrier lipid in the biosynthesis of bacterial cell wall polysaccharide components such as peptidoglycan and lipopolysaccharide. In Salmonella typhi, this protein is Ditrans,polycis-undecaprenyl-diphosphate synthase ((2E,6E)-farnesyl-diphosphate specific).